The following is a 102-amino-acid chain: Small ribosomal subunit protein uS10 (102 aa).

Belongs to the universal ribosomal protein uS10 family. As to quaternary structure, part of the 30S ribosomal subunit.

Functionally, involved in the binding of tRNA to the ribosomes. This is Small ribosomal subunit protein uS10 from Pelobacter propionicus (strain DSM 2379 / NBRC 103807 / OttBd1).